Consider the following 727-residue polypeptide: MEGERKNNNKRWYFTREQLENSPSRRFGLDPDKELSNRQQAANLLQDMGQRLNVSQLTINTAIVYMHRFYMIQSFTQFHRNSVAPAALFLAAKVEEQPKKLEHVIKVAHTCLHPQESLPDTRSEAYLQQVQDLVILESIILQTLGFELTIDHPHTHVVKCTQLVRASKDLAQTSYFMATNSLHLTTFSLQYTPPVVACVCIHLACKWSNWEIPVSTDGKHWWEYVDATVTLELLDELTHEFLQILEKTPNRLKRIWNWRAWQADRKTKADDRGADENSSEQTILNMISQSSSDTTIAGLMSMSASSTTSAVPSLPATEDSKSNLSNVEMLSSERWLSSHPPFKVEPAQGYRKSENLALVGADHSLQQDGSNAFVSQKQNSKSVPSAKVSLKEYRAKHAEELAAQKRQLENMEANVKSQYAYAAQNLLSHHDSHSSVILKMPIEGSENPERPFLEKTDKTALKMRIPMTGGDKAASIKPEEIKMRIKVHTAADKHNSVDDSVTKNREHKEKHKTHPSNHHHHHNHHSHKHSHSQLPAGTGNKRLGDPKHSSQTSTLAHKPYSLSSSFSSSSSSRKRPLPEETGGVAYDHSTKTAKSAKSSSINFSFPPLPTMAQLPGHSSDTSGLHFSQPSCKTRVPHMKLDKSSTGANSHNTPQTTDYQDTVNMLNSLLNAQGVQPTQPPAFEYVHSYGEYMNPRAGGMSSRSGNTDKPRPPPLPSEPPPPLPPLPK.

Position 117 is a phosphoserine (serine 117). Positions 253-270 (KRIWNWRAWQADRKTKAD) match the Nuclear localization signal motif. Residue lysine 343 forms a Glycyl lysine isopeptide (Lys-Gly) (interchain with G-Cter in SUMO2) linkage. Serine 389 carries the post-translational modification Phosphoserine. A coiled-coil region spans residues 389 to 420 (SLKEYRAKHAEELAAQKRQLENMEANVKSQYA). Lysine 391 is modified (N6-acetyllysine). Lysine 416 participates in a covalent cross-link: Glycyl lysine isopeptide (Lys-Gly) (interchain with G-Cter in SUMO2). An ADP-ribosylserine mark is found at serine 417 and serine 475. Residues 481–551 (IKMRIKVHTA…RLGDPKHSSQ (71 aa)) form a histidine-rich domain (HRD) region. Residue lysine 482 forms a Glycyl lysine isopeptide (Lys-Gly) (interchain with G-Cter in SUMO2) linkage. Lysine 486 bears the N6-(ADP-ribosyl)lysine mark. The span at 487 to 507 (VHTAADKHNSVDDSVTKNREH) shows a compositional bias: basic and acidic residues. 2 disordered regions span residues 487–631 (VHTA…QPSC) and 691–727 (YMNPRAGGMSSRSGNTDKPRPPPLPSEPPPPLPPLPK). An ADP-ribosylhistidine modification is found at histidine 488. Phosphoserine occurs at positions 496 and 500. Residues 508 to 531 (KEKHKTHPSNHHHHHNHHSHKHSH) show a composition bias toward basic residues. Histidine 531 is subject to ADP-ribosylhistidine. 3 positions are modified to ADP-ribosylserine: serine 532, serine 550, and serine 553. ADP-ribosylhistidine is present on histidine 557. Over residues 561–571 (SLSSSFSSSSS) the composition is skewed to low complexity. An ADP-ribosylserine modification is found at serine 564. Serine 565 bears the Phosphoserine mark. A compositionally biased stretch (polar residues) spans 616–631 (GHSSDTSGLHFSQPSC). Residues 711 to 727 (PPPLPSEPPPPLPPLPK) show a composition bias toward pro residues.

The protein belongs to the cyclin family. Cyclin C subfamily. In terms of assembly, cyclin-T1 is the predominant cyclin that associates with CDK9 to form a heterodimer called P-TEFb. P-TEFb forms a complex with AFF4/AF5Q31. Component of a complex which is at least composed of HTATSF1/Tat-SF1, P-TEFb complex, RNA pol II, SUPT5H, and NCL/nucleolin. Component of the 7SK snRNP complex at least composed of P-TEFb (composed of CDK9 and CCNT1/cyclin-T1), HEXIM1, HEXIM2, BCDIN3, SART3 proteins and 7SK and U6 snRNAs. Interacts (via central region) with ZMYND8 (via N-terminus); the interaction is direct and the association appears to occur between homodimeric ZMYND8 and the activated form of the P-TEFb complex. Interacts with BRD4, targets chromatin binding. Interacts with JMJD6. Interacts with MDFIC. Interacts with HSF1. Interacts with HTATSF1. Interacts with TBX21. As to quaternary structure, (Microbial infection) Binds to BIV Tat, however Tat binds TAR RNA in a Cyc-T1-independent mode. Post-translationally, ADP-ribosylation on serine residues by PARP1 in response to DNA damage disrupts the phase separation activity of CCNT1, thereby preventing activation of CDK9.

The protein resides in the nucleus. Its function is as follows. Regulatory subunit of the cyclin-dependent kinase pair (CDK9/cyclin-T1) complex, also called positive transcription elongation factor B (P-TEFb), which facilitates the transition from abortive to productive elongation by phosphorylating the CTD (C-terminal domain) of the large subunit of RNA polymerase II (RNA Pol II). Required to activate the protein kinase activity of CDK9: acts by mediating formation of liquid-liquid phase separation (LLPS) that enhances binding of P-TEFb to the CTD of RNA Pol II. In Bos taurus (Bovine), this protein is Cyclin-T1 (CCNT1).